The following is a 252-amino-acid chain: Type II secretion system protein N (252 aa).

The Cytoplasmic segment spans residues 1–4 (MKNR). A helical membrane pass occupies residues 5-25 (LTIGLLLAAIYLFWLLLSAPA). Over 26–252 (RLLALTLSDD…QGEWLSEEKK (227 aa)) the chain is Periplasmic.

This sequence belongs to the GSP N family.

The protein resides in the cell inner membrane. In terms of biological role, involved in a type II secretion system (T2SS, formerly general secretion pathway, GSP) for the export of proteins. Required for the translocation of pullulanase. The chain is Type II secretion system protein N (pulN) from Klebsiella pneumoniae.